Here is a 306-residue protein sequence, read N- to C-terminus: Homoserine O-acetyltransferase (306 aa).

Cys142 functions as the Acyl-thioester intermediate in the catalytic mechanism. 2 residues coordinate substrate: Lys163 and Ser194. The Proton acceptor role is filled by His237. Glu239 is an active-site residue. Residue Arg251 coordinates substrate.

It belongs to the MetA family.

The protein localises to the cytoplasm. It carries out the reaction L-homoserine + acetyl-CoA = O-acetyl-L-homoserine + CoA. Its pathway is amino-acid biosynthesis; L-methionine biosynthesis via de novo pathway; O-acetyl-L-homoserine from L-homoserine: step 1/1. Transfers an acetyl group from acetyl-CoA to L-homoserine, forming acetyl-L-homoserine. This Clostridium tetani (strain Massachusetts / E88) protein is Homoserine O-acetyltransferase.